We begin with the raw amino-acid sequence, 89 residues long: Small ribosomal subunit protein uS15 (89 aa).

This sequence belongs to the universal ribosomal protein uS15 family. As to quaternary structure, part of the 30S ribosomal subunit. Forms a bridge to the 50S subunit in the 70S ribosome, contacting the 23S rRNA.

Its function is as follows. One of the primary rRNA binding proteins, it binds directly to 16S rRNA where it helps nucleate assembly of the platform of the 30S subunit by binding and bridging several RNA helices of the 16S rRNA. In terms of biological role, forms an intersubunit bridge (bridge B4) with the 23S rRNA of the 50S subunit in the ribosome. The polypeptide is Small ribosomal subunit protein uS15 (Azoarcus sp. (strain BH72)).